A 295-amino-acid polypeptide reads, in one-letter code: Cbb3-type cytochrome c oxidase subunit CcoP (295 aa).

Over M1–K31 the chain is Cytoplasmic. A helical transmembrane segment spans residues W32–P52. Residues A53–K295 lie on the Periplasmic side of the membrane. Cytochrome c domains follow at residues F108–N200 and A207–G292. Residues C121, C124, H125, M175, C220, C223, H224, and M269 each coordinate heme c.

This sequence belongs to the CcoP / FixP family. In terms of assembly, component of the cbb3-type cytochrome c oxidase at least composed of CcoN, CcoO, CcoQ and CcoP. The cofactor is heme c.

The protein localises to the cell inner membrane. It functions in the pathway energy metabolism; oxidative phosphorylation. Functionally, C-type cytochrome. Part of the cbb3-type cytochrome c oxidase complex. CcoP subunit is required for transferring electrons from donor cytochrome c via its heme groups to CcoO subunit. From there, electrons are shuttled to the catalytic binuclear center of CcoN subunit where oxygen reduction takes place. The complex also functions as a proton pump. The sequence is that of Cbb3-type cytochrome c oxidase subunit CcoP from Azospirillum brasilense.